A 251-amino-acid polypeptide reads, in one-letter code: MQTKETRGLVLYNRPFREDDKLVKIFTETSGKHMFFVRHATNSKLSSVIQPLILANFILKINNHGLSYIEDYKGVSLFKEINADIYKLAYATYLVSLADAAISDAVYDAPLFAFLIKTLELMDEGLDYEILTNIFEIQILDRFGVQLNFHDCVFCHRVGLAFDFSHRYSGLLCPEHYEKDLYRSHLDPNVPYLLNQFQTLHFDSLKTISVKPDMKQKLRKFIDEVYEDYIGLRLKSKKFIDDLDHWGQVMK.

Belongs to the RecO family.

In terms of biological role, involved in DNA repair and RecF pathway recombination. This Streptococcus mutans serotype c (strain ATCC 700610 / UA159) protein is DNA repair protein RecO.